The sequence spans 256 residues: Phosphoribosylaminoimidazole-succinocarboxamide synthase (256 aa).

Belongs to the SAICAR synthetase family.

The enzyme catalyses 5-amino-1-(5-phospho-D-ribosyl)imidazole-4-carboxylate + L-aspartate + ATP = (2S)-2-[5-amino-1-(5-phospho-beta-D-ribosyl)imidazole-4-carboxamido]succinate + ADP + phosphate + 2 H(+). Its pathway is purine metabolism; IMP biosynthesis via de novo pathway; 5-amino-1-(5-phospho-D-ribosyl)imidazole-4-carboxamide from 5-amino-1-(5-phospho-D-ribosyl)imidazole-4-carboxylate: step 1/2. In Synechococcus sp. (strain JA-3-3Ab) (Cyanobacteria bacterium Yellowstone A-Prime), this protein is Phosphoribosylaminoimidazole-succinocarboxamide synthase.